Consider the following 472-residue polypeptide: Uronate isomerase (472 aa).

This sequence belongs to the metallo-dependent hydrolases superfamily. Uronate isomerase family.

It carries out the reaction D-glucuronate = D-fructuronate. It catalyses the reaction aldehydo-D-galacturonate = keto-D-tagaturonate. Its pathway is carbohydrate metabolism; pentose and glucuronate interconversion. This Xanthomonas euvesicatoria pv. vesicatoria (strain 85-10) (Xanthomonas campestris pv. vesicatoria) protein is Uronate isomerase.